A 458-amino-acid chain; its full sequence is UDP-N-acetylmuramate--L-alanine ligase (458 aa).

Position 118–124 (118–124) interacts with ATP; sequence GTHGKTT.

This sequence belongs to the MurCDEF family.

Its subcellular location is the cytoplasm. It catalyses the reaction UDP-N-acetyl-alpha-D-muramate + L-alanine + ATP = UDP-N-acetyl-alpha-D-muramoyl-L-alanine + ADP + phosphate + H(+). It participates in cell wall biogenesis; peptidoglycan biosynthesis. Functionally, cell wall formation. The polypeptide is UDP-N-acetylmuramate--L-alanine ligase (Clostridium botulinum (strain Okra / Type B1)).